Reading from the N-terminus, the 159-residue chain is Ribosomal RNA large subunit methyltransferase H (159 aa).

Residues L76, G108, and 127 to 132 contribute to the S-adenosyl-L-methionine site; that span reads FGKLTL.

It belongs to the RNA methyltransferase RlmH family. Homodimer.

The protein localises to the cytoplasm. It carries out the reaction pseudouridine(1915) in 23S rRNA + S-adenosyl-L-methionine = N(3)-methylpseudouridine(1915) in 23S rRNA + S-adenosyl-L-homocysteine + H(+). Its function is as follows. Specifically methylates the pseudouridine at position 1915 (m3Psi1915) in 23S rRNA. The protein is Ribosomal RNA large subunit methyltransferase H of Streptococcus sanguinis (strain SK36).